The sequence spans 217 residues: Adenylate kinase (217 aa).

Residue 10 to 15 (GAGKGT) coordinates ATP. The interval 30–59 (STGDMLRAAIREGTELGLKAKSVMESGGLV) is NMP. AMP-binding positions include Thr-31, Arg-36, 57–59 (GLV), 85–88 (GFPR), and Gln-92. The segment at 122-159 (GRRQHPASGRVYHVVYNPPKVEGKDDETGEDLVQRPDD) is LID. ATP-binding positions include Arg-123 and 132–133 (VY). Arg-156 and Arg-167 together coordinate AMP. Residue Arg-202 coordinates ATP.

This sequence belongs to the adenylate kinase family. Monomer.

Its subcellular location is the cytoplasm. The enzyme catalyses AMP + ATP = 2 ADP. Its pathway is purine metabolism; AMP biosynthesis via salvage pathway; AMP from ADP: step 1/1. Catalyzes the reversible transfer of the terminal phosphate group between ATP and AMP. Plays an important role in cellular energy homeostasis and in adenine nucleotide metabolism. The protein is Adenylate kinase of Acinetobacter baumannii (strain AB307-0294).